The primary structure comprises 179 residues: UPF0303 protein P4H10.12 (179 aa).

The protein belongs to the UPF0303 family.

The polypeptide is UPF0303 protein P4H10.12 (Schizosaccharomyces pombe (strain 972 / ATCC 24843) (Fission yeast)).